The chain runs to 531 residues: Developmental and secondary metabolism regulator VE1 (531 aa).

The 195-residue stretch at 26 to 220 (NRSLWYQMTV…ADQGCPVRIR (195 aa)) folds into the Velvet domain. Positions 40–45 (ERARAC) match the Nuclear localization signal motif. Disordered regions lie at residues 206 to 435 (LSKT…SQTS) and 447 to 517 (PVSP…SRAD). Residues 244–253 (FERREEDFGR) are compositionally biased toward basic and acidic residues. Residues 295–306 (YPPPPPPPPSYE) are compositionally biased toward pro residues. Positions 348–357 (YAPTSQSPYS) are enriched in polar residues. A compositionally biased stretch (basic and acidic residues) spans 381-390 (LKHELYDRRQ). A compositionally biased stretch (low complexity) spans 391-405 (STSTYVPPSPSVYST). The span at 416-427 (SYPPTPVAAPRP) shows a compositional bias: pro residues. The interval 430-461 (MHSQTSLPALKIDQLVSPVSPLPPIEPQTGPA) is PEST. Positions 479–491 (FAQSTRPLHNGQR) are enriched in polar residues.

It belongs to the velvet family. VeA subfamily. As to quaternary structure, component of the heterotrimeric velvet complex composed of LAE1, VE1 and VELB; VE1 acting as a bridging protein between LAE1 and VELB. Interacts with VELB and VELC.

It is found in the nucleus. Its subcellular location is the cytoplasm. Component of the velvet transcription factor complex that controls sexual/asexual developmental ratio in response to light, promoting sexual development in the darkness while stimulating asexual sporulation under illumination. The velvet complex hat acts as a global regulator for secondary metabolite gene expression. Controls the expression of the cycotoxins fumonisins and fusarins gene cluster. Involved in cell wall integrity, cell surface hydrophobicity, hyphal polarity and conidiation pattern. Required for pathogenicity against maize seedlings. Involved in oxidative stress resistance by positively regulating the transcription of the catalase-encoding gene CAT2. The protein is Developmental and secondary metabolism regulator VE1 of Gibberella moniliformis (strain M3125 / FGSC 7600) (Maize ear and stalk rot fungus).